We begin with the raw amino-acid sequence, 202 residues long: MATLIYVDKENEEPGTLVATKDGLKLGSGPSIKALDGRSQVSTSRFGKTFDAATALPKATRKALGTVNRATEKSVKTNGPLKQKQPSFSAKKMTEKTVKAKSSVPASDDAYPEIEKLFPFNPLGFESFNLPEEHQIAHLPLSGVPLMILDEERELEKLFQLGPPLPLKMPSPPWESNLLQSPSSILLTLDVELPPVCSDIDI.

The short motif at 61-64 is the D-box element; the sequence is RKAL. A disordered region spans residues 67–92; sequence VNRATEKSVKTNGPLKQKQPSFSAKK. Residues 163–173 carry the SH3-binding motif; that stretch reads PPLPLKMPSPP.

The protein belongs to the securin family.

It localises to the cytoplasm. The protein resides in the nucleus. The polypeptide is Putative pituitary tumor-transforming gene 3 protein (PTTG3) (Pongo pygmaeus (Bornean orangutan)).